Reading from the N-terminus, the 441-residue chain is ATP-dependent RNA helicase SUB2-1 (441 aa).

A compositionally biased stretch (acidic residues) spans 1–19 (MSHEGEEDLLEYSDNEQDI). Residues 1–46 (MSHEGEEDLLEYSDNEQDIQVDASKAAEPSELDATTAEDASNGDAE) form a disordered region. The Q motif signature appears at 57–85 (TGFKDFLLKPELARAIIDCGFEHPSEVQQ). A Helicase ATP-binding domain is found at 88-263 (IPQSIHGTDV…RRFLQNPLEI (176 aa)). 101-108 (AKSGLGKT) serves as a coordination point for ATP. The DECD box motif lies at 210–213 (DECD). In terms of domain architecture, Helicase C-terminal spans 291-436 (KLAQLLDDLE…EFPEEGIDPS (146 aa)).

It belongs to the DEAD box helicase family. DECD subfamily.

Its subcellular location is the nucleus. It catalyses the reaction ATP + H2O = ADP + phosphate + H(+). In terms of biological role, ATP-binding RNA helicase involved in transcription elongation and required for the export of mRNA out of the nucleus. SUB2 also plays a role in pre-mRNA splicing and spliceosome assembly. May be involved in rDNA and telomeric silencing, and maintenance of genome integrity. The chain is ATP-dependent RNA helicase SUB2-1 (SUB2-1) from Vanderwaltozyma polyspora (strain ATCC 22028 / DSM 70294 / BCRC 21397 / CBS 2163 / NBRC 10782 / NRRL Y-8283 / UCD 57-17) (Kluyveromyces polysporus).